A 116-amino-acid chain; its full sequence is Small ribosomal subunit protein bS16 (116 aa).

Residues 88–116 are disordered; sequence RNNPKAAVPGKRMAELAKKKADRAAASAE. The span at 99 to 110 shows a compositional bias: basic and acidic residues; that stretch reads RMAELAKKKADR.

This sequence belongs to the bacterial ribosomal protein bS16 family.

The sequence is that of Small ribosomal subunit protein bS16 from Cereibacter sphaeroides (strain ATCC 17029 / ATH 2.4.9) (Rhodobacter sphaeroides).